The sequence spans 94 residues: Co-chaperonin GroES (94 aa).

Belongs to the GroES chaperonin family. In terms of assembly, heptamer of 7 subunits arranged in a ring. Interacts with the chaperonin GroEL.

It localises to the cytoplasm. Functionally, together with the chaperonin GroEL, plays an essential role in assisting protein folding. The GroEL-GroES system forms a nano-cage that allows encapsulation of the non-native substrate proteins and provides a physical environment optimized to promote and accelerate protein folding. GroES binds to the apical surface of the GroEL ring, thereby capping the opening of the GroEL channel. The protein is Co-chaperonin GroES of Clostridium novyi (strain NT).